The primary structure comprises 139 residues: MSWSGPLRGLNTSLTCGPALVPRLWATCSMATLNQMHRLGGPPKRPPQKLGPTEGRPQLKGVVLCTFTRKPKKPNSANRKCCRVRLSTGQEAVCFIPGEGHTLQEHQIVLVEGGRTQDLPGVKLTVVRGKYDCGHVQKK.

A mitochondrion-targeting transit peptide spans methionine 1–serine 29. The disordered stretch occupies residues methionine 36–arginine 56.

The protein belongs to the universal ribosomal protein uS12 family. Component of the mitochondrial ribosome small subunit (28S) which comprises a 12S rRNA and about 30 distinct proteins.

It is found in the mitochondrion. This chain is Small ribosomal subunit protein uS12m (MRPS12), found in Pongo abelii (Sumatran orangutan).